We begin with the raw amino-acid sequence, 95 residues long: MIRSELIQKIADENPHLYQRDVERIVNTVFEEVTNAMSRGDRVELRGFGAFSVKKRDARVGRNPRTGETVHVEEKHVPFFKTGKLLRDRLNGKEE.

The protein belongs to the bacterial histone-like protein family. As to quaternary structure, heterodimer of an alpha and a beta chain.

Functionally, this protein is one of the two subunits of integration host factor, a specific DNA-binding protein that functions in genetic recombination as well as in transcriptional and translational control. This is Integration host factor subunit beta from Ruegeria sp. (strain TM1040) (Silicibacter sp.).